Here is a 201-residue protein sequence, read N- to C-terminus: Small ribosomal subunit protein uS4c (201 aa).

Residues 20–43 are disordered; sequence GLTSKRPRAGSDLRNQSRSGKRSQ. The S4 RNA-binding domain maps to 89–149; the sequence is MRLDNILFRL…NEQKSRALIQ (61 aa).

It belongs to the universal ribosomal protein uS4 family. In terms of assembly, part of the 30S ribosomal subunit. Contacts protein S5. The interaction surface between S4 and S5 is involved in control of translational fidelity.

The protein localises to the plastid. Its subcellular location is the chloroplast. Its function is as follows. One of the primary rRNA binding proteins, it binds directly to 16S rRNA where it nucleates assembly of the body of the 30S subunit. With S5 and S12 plays an important role in translational accuracy. The chain is Small ribosomal subunit protein uS4c (rps4) from Vitis vinifera (Grape).